The chain runs to 290 residues: Xyloglucan endotransglucosylase/hydrolase protein 9 (290 aa).

Residues 1–26 (MVGMDLFKCVMMIMVLVVSCGEAVSG) form the signal peptide. One can recognise a GH16 domain in the interval 27-215 (AKFDELYRSS…WSHAPFVASY (189 aa)). An N-linked (GlcNAc...) asparagine glycan is attached at asparagine 55. Glutamate 101 acts as the Nucleophile in catalysis. Glutamate 105 serves as the catalytic Proton donor. Glutamate 105 lines the xyloglucan pocket. A glycan (N-linked (GlcNAc...) asparagine) is linked at asparagine 109. Xyloglucan contacts are provided by residues 118–120 (QTN), 128–130 (NRE), 194–195 (DW), and glycine 199. 2 cysteine pairs are disulfide-bonded: cysteine 223–cysteine 234 and cysteine 271–cysteine 284. Arginine 276 provides a ligand contact to xyloglucan.

The protein belongs to the glycosyl hydrolase 16 family. XTH group 1 subfamily. In terms of processing, contains at least one intrachain disulfide bond essential for its enzymatic activity. Highly expressed in shoot apices. In the vegetative and reproductive phases, it accumulates in the shoot apex region, where cell division is most active. In the reproductive phase, it is also expressed in flower buds, flower stalks and internodes bearing flowers.

It is found in the secreted. It localises to the cell wall. The protein localises to the extracellular space. The protein resides in the apoplast. The enzyme catalyses breaks a beta-(1-&gt;4) bond in the backbone of a xyloglucan and transfers the xyloglucanyl segment on to O-4 of the non-reducing terminal glucose residue of an acceptor, which can be a xyloglucan or an oligosaccharide of xyloglucan.. Functionally, catalyzes xyloglucan endohydrolysis (XEH) and/or endotransglycosylation (XET). Cleaves and religates xyloglucan polymers, an essential constituent of the primary cell wall, and thereby participates in cell wall construction of growing tissues. Involved in internodal cell elongation. The polypeptide is Xyloglucan endotransglucosylase/hydrolase protein 9 (XTH9) (Arabidopsis thaliana (Mouse-ear cress)).